A 165-amino-acid chain; its full sequence is Basic transcription factor 3 (165 aa).

Residues 33 to 97 form the NAC-A/B domain; that stretch reads TTDDKRLQST…PQTKKLQDIL (65 aa). The span at 120 to 134 shows a compositional bias: polar residues; the sequence is QKQASGEGNAASATI. The tract at residues 120–144 is disordered; sequence QKQASGEGNAASATIQEEDDDDVPE.

This sequence belongs to the NAC-beta family. In terms of assembly, part of the nascent polypeptide-associated complex (NAC). Interacts with EIF(ISO)4E.

This is Basic transcription factor 3 from Arabidopsis thaliana (Mouse-ear cress).